We begin with the raw amino-acid sequence, 157 residues long: Protein EOLA1 (157 aa).

The ASCH domain occupies 6 to 92 (LSFRQPYAGL…IAGLIDIGET (87 aa)).

The protein belongs to the EOLA family. Interacts with MT2A.

Its function is as follows. May play a role in cell protection during the inflammatory response. In epithelial cells, negatively regulates IL6 production and apoptosis through the regulation of MT2A expression. The protein is Protein EOLA1 of Mus musculus (Mouse).